The primary structure comprises 479 residues: Pre-glycoprotein polyprotein GP complex (479 aa).

Glycine 2 carries the N-myristoyl glycine; by host lipid modification. Over 2 to 17 (GQLISFFQDIPIFFEE) the chain is Extracellular. Residues 18 to 32 (ALNVALAVVTLLAII) traverse the membrane as a helical segment. A topological domain (cytoplasmic) is located at residue lysine 33. The chain crosses the membrane as a helical span at residues 34–53 (GIVNVWKSGILQLFVFLVLA). Extracellular-facing segments span residues 54 to 58 (GRSCS) and 59 to 418 (FKVG…TLVD). Zn(2+) is bound at residue cysteine 57. 3 disulfide bridges follow: cysteine 85-cysteine 221, cysteine 265-cysteine 278, and cysteine 287-cysteine 296. Residues asparagine 88, asparagine 125, asparagine 174, asparagine 202, and asparagine 214 are each glycosylated (N-linked (GlcNAc...) asparagine; by host). N-linked (GlcNAc...) asparagine; by host glycosylation is found at asparagine 314, asparagine 351, asparagine 359, asparagine 376, and asparagine 381. Cysteine 350 and cysteine 371 are joined by a disulfide. Residues 419–439 (LCFWSAIFFTTSLFLHLVGFP) traverse the membrane as a helical segment. The Cytoplasmic portion of the chain corresponds to 440 to 479 (THRHIQGDPCPLPHRLDRNGACRCGRFQKLGKQVTWKRKH). Residues histidine 441, histidine 443, cysteine 449, histidine 453, cysteine 461, cysteine 463, and histidine 479 each contribute to the Zn(2+) site.

The protein belongs to the arenaviridae GPC protein family. Homotetramer; disulfide-linked. As to quaternary structure, homotetramer. GP2 homotetramers bind through ionic interactions with GP1 homotetramers to form the GP complex together with the stable signal peptide. The GP-C polyprotein interacts with the host protease MBTPS1/SKI-1 resulting in the polyprotein processing. In terms of processing, specific enzymatic cleavages in vivo yield mature proteins. GP-C polyprotein is cleaved in the endoplasmic reticulum by the host protease MBTPS1. Only cleaved glycoprotein is incorporated into virions. Post-translationally, the SSP remains stably associated with the GP complex following cleavage by signal peptidase and plays crucial roles in the trafficking of GP through the secretory pathway. Myristoylation is necessary for GP2-mediated fusion activity.

The protein resides in the virion membrane. It is found in the host endoplasmic reticulum membrane. It localises to the host Golgi apparatus membrane. Its subcellular location is the host cell membrane. Functionally, interacts with the host receptor. Mediates virus attachment to host TFRC. This attachment induces virion internalization predominantly through clathrin-mediated endocytosis. Its function is as follows. Class I viral fusion protein that directs fusion of viral and host endosomal membranes, leading to delivery of the nucleocapsid into the cytoplasm. Membrane fusion is mediated by irreversible conformational changes induced upon acidification in the endosome. Stable signal peptide (SSP): cleaved and functions as a signal peptide. In addition, it is also retained as the third component of the GP complex. The SSP is required for efficient glycoprotein expression, post-translational maturation cleavage of GP1 and GP2, glycoprotein transport to the cell surface plasma membrane, formation of infectious virus particles, and acid pH-dependent glycoprotein-mediated cell fusion. The protein is Pre-glycoprotein polyprotein GP complex of Homo sapiens (Human).